Here is a 969-residue protein sequence, read N- to C-terminus: Leucine--tRNA ligase (969 aa).

Residues 78–89 carry the 'HIGH' region motif; it reads PYPSGEGLHVGH. The 'KMSKS' region motif lies at 739–743; it reads KIGKS. Lys742 lines the ATP pocket.

The protein belongs to the class-I aminoacyl-tRNA synthetase family.

Its subcellular location is the cytoplasm. It catalyses the reaction tRNA(Leu) + L-leucine + ATP = L-leucyl-tRNA(Leu) + AMP + diphosphate. The chain is Leucine--tRNA ligase from Mycobacterium tuberculosis (strain ATCC 25177 / H37Ra).